We begin with the raw amino-acid sequence, 501 residues long: LIM domain-containing protein HDR3 (501 aa).

The disordered stretch occupies residues 33–67; sequence GEANRRRPRVTAGEETTLWEEPVRPKKEEPPRHNN. Residues 53–67 are compositionally biased toward basic and acidic residues; sequence EPVRPKKEEPPRHNN. 2 UIM domains span residues 65–84 and 94–113; these read HNNE…DAKN and ENDE…NPYQ. An LIM zinc-binding domain is found at 131-191; that stretch reads RVCGGCKHEI…KLCYKELHHP (61 aa). Positions 429-448 are disordered; sequence YASSSSSSCRPPPSKKGGIS.

Interacts (via N-terminus) with GW6A (via C-terminus).

Its function is as follows. Ubiquitin receptor that functions as a positive regulator of grain size and weight. Functions in the same genetic pathway as GW6A to regulate grain size. Modulates grain size in a similar manner to GW6A, by altering cell proliferation in spikelet hulls. Interacts with and enhances the ubiquitination of GW6A. This stabilizes GW6A, delays protein degradation by the 26S proteasome and enhances GW6A histone acetyltransferase activity. This Oryza sativa subsp. japonica (Rice) protein is LIM domain-containing protein HDR3.